The sequence spans 170 residues: Ribosome maturation factor RimM (170 aa).

In terms of domain architecture, PRC barrel spans 96 to 169; the sequence is EGEFYACDVE…VVQLATLEGL (74 aa).

The protein belongs to the RimM family. As to quaternary structure, binds ribosomal protein uS19.

It is found in the cytoplasm. Functionally, an accessory protein needed during the final step in the assembly of 30S ribosomal subunit, possibly for assembly of the head region. Essential for efficient processing of 16S rRNA. May be needed both before and after RbfA during the maturation of 16S rRNA. It has affinity for free ribosomal 30S subunits but not for 70S ribosomes. In Sorangium cellulosum (strain So ce56) (Polyangium cellulosum (strain So ce56)), this protein is Ribosome maturation factor RimM.